The primary structure comprises 227 residues: UPF0758 protein Pcar_0065 (227 aa).

The MPN domain occupies 105 to 227; it reads RYTSPQAVFA…YVSLADRGVL (123 aa). The Zn(2+) site is built by His176, His178, and Asp189. The JAMM motif motif lies at 176 to 189; sequence HNHPSGDPSPSRED.

Belongs to the UPF0758 family.

The protein is UPF0758 protein Pcar_0065 of Syntrophotalea carbinolica (strain DSM 2380 / NBRC 103641 / GraBd1) (Pelobacter carbinolicus).